Reading from the N-terminus, the 353-residue chain is Photosystem II D2 protein (353 aa).

N-acetylthreonine is present on T2. At T2 the chain carries Phosphothreonine. The chain crosses the membrane as a helical span at residues 41–61; it reads CAYFALGGWFTGTTFVTSWYT. Position 118 (H118) interacts with chlorophyll a. A helical membrane pass occupies residues 125–141; the sequence is GFMLRQFELARSVQLRP. 2 residues coordinate pheophytin a: Q130 and N143. A helical membrane pass occupies residues 153–166; the sequence is VFVSVFLIYPLGQS. H198 contacts chlorophyll a. The helical transmembrane segment at 208 to 228 threads the bilayer; it reads AALLCAIHGATVENTLFEDGD. The a plastoquinone site is built by H215 and F262. H215 lines the Fe cation pocket. Residue H269 coordinates Fe cation. The chain crosses the membrane as a helical span at residues 279–295; that stretch reads GLWMSALGVVGLALNLR.

Belongs to the reaction center PufL/M/PsbA/D family. PSII is composed of 1 copy each of membrane proteins PsbA, PsbB, PsbC, PsbD, PsbE, PsbF, PsbH, PsbI, PsbJ, PsbK, PsbL, PsbM, PsbT, PsbX, PsbY, PsbZ, Psb30/Ycf12, at least 3 peripheral proteins of the oxygen-evolving complex and a large number of cofactors. It forms dimeric complexes. The D1/D2 heterodimer binds P680, chlorophylls that are the primary electron donor of PSII, and subsequent electron acceptors. It shares a non-heme iron and each subunit binds pheophytin, quinone, additional chlorophylls, carotenoids and lipids. There is also a Cl(-1) ion associated with D1 and D2, which is required for oxygen evolution. The PSII complex binds additional chlorophylls, carotenoids and specific lipids. is required as a cofactor.

The protein localises to the plastid. Its subcellular location is the chloroplast thylakoid membrane. The catalysed reaction is 2 a plastoquinone + 4 hnu + 2 H2O = 2 a plastoquinol + O2. Photosystem II (PSII) is a light-driven water:plastoquinone oxidoreductase that uses light energy to abstract electrons from H(2)O, generating O(2) and a proton gradient subsequently used for ATP formation. It consists of a core antenna complex that captures photons, and an electron transfer chain that converts photonic excitation into a charge separation. The D1/D2 (PsbA/PsbD) reaction center heterodimer binds P680, the primary electron donor of PSII as well as several subsequent electron acceptors. D2 is needed for assembly of a stable PSII complex. In Populus deltoides (Eastern poplar), this protein is Photosystem II D2 protein.